The primary structure comprises 397 residues: Elongation factor Tu (397 aa).

One can recognise a tr-type G domain in the interval 10–206; it reads KPHVNIGTIG…AVDESIPDPV (197 aa). The interval 19–26 is G1; sequence GHVDHGKT. Residue 19 to 26 coordinates GTP; the sequence is GHVDHGKT. Threonine 26 provides a ligand contact to Mg(2+). Residues 62 to 66 form a G2 region; that stretch reads GITIN. Residues 83-86 form a G3 region; it reads DAPG. Residues 83–87 and 138–141 contribute to the GTP site; these read DAPGH and NKSD. The interval 138-141 is G4; the sequence is NKSD. The G5 stretch occupies residues 176–178; that stretch reads SAL.

The protein belongs to the TRAFAC class translation factor GTPase superfamily. Classic translation factor GTPase family. EF-Tu/EF-1A subfamily. Monomer.

It is found in the cytoplasm. It carries out the reaction GTP + H2O = GDP + phosphate + H(+). In terms of biological role, GTP hydrolase that promotes the GTP-dependent binding of aminoacyl-tRNA to the A-site of ribosomes during protein biosynthesis. The protein is Elongation factor Tu of Mycobacteroides abscessus (strain ATCC 19977 / DSM 44196 / CCUG 20993 / CIP 104536 / JCM 13569 / NCTC 13031 / TMC 1543 / L948) (Mycobacterium abscessus).